The primary structure comprises 506 residues: uncharacterized protein (506 aa).

282 to 289 (GIQGTGKS) provides a ligand contact to ATP.

This sequence belongs to the AAA ATPase family. Highly divergent.

The protein localises to the plastid. It localises to the chloroplast. This is an uncharacterized protein from Guillardia theta (Cryptophyte).